Here is a 154-residue protein sequence, read N- to C-terminus: uncharacterized protein (154 aa).

This is an uncharacterized protein from Sulfolobus islandicus rod-shaped virus 1 (SIRV-1).